Consider the following 226-residue polypeptide: Cytidylate kinase (226 aa).

Position 14–22 (14–22 (GPAGAGKST)) interacts with ATP.

This sequence belongs to the cytidylate kinase family. Type 1 subfamily.

Its subcellular location is the cytoplasm. It carries out the reaction CMP + ATP = CDP + ADP. The catalysed reaction is dCMP + ATP = dCDP + ADP. The sequence is that of Cytidylate kinase from Symbiobacterium thermophilum (strain DSM 24528 / JCM 14929 / IAM 14863 / T).